We begin with the raw amino-acid sequence, 561 residues long: Laccase-1 (561 aa).

A signal peptide spans 1-20 (MKNSFFSSLAKFASLSLAFA). Plastocyanin-like domains are found at residues 68–185 (VVQN…GPAT) and 191–337 (DLGM…YTGS). 3 N-linked (GlcNAc...) asparagine glycosylation sites follow: N71, N87, and N114. Cu cation-binding residues include H119, H121, H163, and H165. C140 and C542 are joined by a disulfide. 5 N-linked (GlcNAc...) asparagine glycosylation sites follow: N226, N284, N327, N391, and N398. Residues 396 to 525 (LLNWTDPTLL…ALQFVESESS (130 aa)) enclose the Plastocyanin-like 3 domain. The Cu cation site is built by H445, H448, H450, H504, C505, H506, and H510.

Belongs to the multicopper oxidase family. Requires Cu cation as cofactor.

It localises to the secreted. The catalysed reaction is 4 hydroquinone + O2 = 4 benzosemiquinone + 2 H2O. Lignin degradation and detoxification of lignin-derived products. This is Laccase-1 (lcc1) from Botryotinia fuckeliana (Noble rot fungus).